A 228-amino-acid polypeptide reads, in one-letter code: Urease accessory protein UreH (228 aa).

5 helical membrane passes run 48-68 (VFWG…IILM), 79-99 (SLEF…ILSL), 130-150 (LFIG…LTMS), 162-182 (ILFF…LIGI), and 196-216 (AFIQ…MYNL).

It belongs to the NiCoT transporter (TC 2.A.52) family.

The protein resides in the cell membrane. Its function is as follows. Probably facilitates nickel incorporation. May constitute a multicomponent high-affinity nickel transporter. Not essential for the expression of catalytically active urease. This is Urease accessory protein UreH (ureH) from Bacillus sp. (strain TB-90).